We begin with the raw amino-acid sequence, 555 residues long: Formate--tetrahydrofolate ligase (555 aa).

Residue 65 to 72 coordinates ATP; the sequence is TPAGEGKS.

This sequence belongs to the formate--tetrahydrofolate ligase family.

The catalysed reaction is (6S)-5,6,7,8-tetrahydrofolate + formate + ATP = (6R)-10-formyltetrahydrofolate + ADP + phosphate. The protein operates within one-carbon metabolism; tetrahydrofolate interconversion. The polypeptide is Formate--tetrahydrofolate ligase (Staphylococcus aureus (strain MRSA252)).